Reading from the N-terminus, the 437-residue chain is Protein translocase subunit SecY (437 aa).

Helical transmembrane passes span 19-39 (LFTLGIIVVYRLGTHIPIPGV), 69-89 (LLQITVFALGIMPYITASIIL), 122-142 (VALAILQGTGLVATARSGALF), 157-177 (IFTTVVMVICMTAGTCVVMWL), 189-209 (GMSILMFISIAATFPSALWAI), 219-239 (WIEFGTVILVGLVMVGLVVFV), 275-295 (GVIPVIFASSLLYIPALIVQF), 318-338 (HIILYFFLIVFFAFFYVAISF), 378-398 (GSLYLGLIALVPTMALAGFGA), and 400-420 (QNFPFGGTSILIIVGVGLETV).

Belongs to the SecY/SEC61-alpha family. Component of the Sec protein translocase complex. Heterotrimer consisting of SecY, SecE and SecG subunits. The heterotrimers can form oligomers, although 1 heterotrimer is thought to be able to translocate proteins. Interacts with the ribosome. Interacts with SecDF, and other proteins may be involved. Interacts with SecA.

The protein localises to the cell membrane. Functionally, the central subunit of the protein translocation channel SecYEG. Consists of two halves formed by TMs 1-5 and 6-10. These two domains form a lateral gate at the front which open onto the bilayer between TMs 2 and 7, and are clamped together by SecE at the back. The channel is closed by both a pore ring composed of hydrophobic SecY resides and a short helix (helix 2A) on the extracellular side of the membrane which forms a plug. The plug probably moves laterally to allow the channel to open. The ring and the pore may move independently. This chain is Protein translocase subunit SecY, found in Streptomyces lividans.